The chain runs to 138 residues: Large ribosomal subunit protein uL16 (138 aa).

Residues 1–15 (MLSPRKVKYRKKQRG) show a composition bias toward basic residues. A disordered region spans residues 1–21 (MLSPRKVKYRKKQRGRLSGEA).

The protein belongs to the universal ribosomal protein uL16 family. As to quaternary structure, part of the 50S ribosomal subunit.

In terms of biological role, binds 23S rRNA and is also seen to make contacts with the A and possibly P site tRNAs. The chain is Large ribosomal subunit protein uL16 from Borrelia recurrentis (strain A1).